A 2185-amino-acid chain; its full sequence is DNA polymerase epsilon catalytic subunit A (2185 aa).

Residues cysteine 2072, cysteine 2075, cysteine 2094, and cysteine 2097 each coordinate Zn(2+). The segment at 2072 to 2097 (CEHCSYISDIDICRESMERVFICQSC) adopts a CysA-type zinc-finger fold. Positions 2128, 2131, 2143, and 2145 each coordinate [4Fe-4S] cluster. Positions 2128 to 2145 (CNKCHKIKEDAMSPYCPC) match the CysB motif motif.

This sequence belongs to the DNA polymerase type-B family. As to quaternary structure, heterotetramer. Consists of 4 subunits: POL2, DPB2, DPB3 and DPB4. [4Fe-4S] cluster is required as a cofactor.

The protein resides in the nucleus. The catalysed reaction is DNA(n) + a 2'-deoxyribonucleoside 5'-triphosphate = DNA(n+1) + diphosphate. Its function is as follows. DNA polymerase II participates in chromosomal DNA replication. The chain is DNA polymerase epsilon catalytic subunit A (POL2) from Kluyveromyces lactis (strain ATCC 8585 / CBS 2359 / DSM 70799 / NBRC 1267 / NRRL Y-1140 / WM37) (Yeast).